The following is a 339-amino-acid chain: Malate/(S)-sulfolactate dehydrogenase (339 aa).

Belongs to the LDH2/MDH2 oxidoreductase family. As to quaternary structure, homodimer.

It localises to the cytoplasm. The catalysed reaction is (S)-malate + NAD(+) = oxaloacetate + NADH + H(+). It carries out the reaction (S)-malate + NADP(+) = oxaloacetate + NADPH + H(+). The enzyme catalyses (2S)-3-sulfolactate + NAD(+) = 3-sulfopyruvate + NADH + H(+). In terms of biological role, acts on oxaloacetate, sulfopyruvate but not on pyruvate. Has a higher selectivity for the coenzyme NADH than for NADPH. The protein is Malate/(S)-sulfolactate dehydrogenase (mdh) of Methanothermus fervidus (strain ATCC 43054 / DSM 2088 / JCM 10308 / V24 S).